The sequence spans 324 residues: Deoxyhypusine hydroxylase (324 aa).

2 HEAT-like PBS-type repeats span residues 60–86 (LKHE…VLED) and 94–119 (RHEA…YLHR). His62, Glu63, His95, and Glu96 together coordinate Fe cation. The segment covering 143 to 152 (EERKQEKLRQ) has biased composition (basic and acidic residues). A disordered region spans residues 143–171 (EERKQEKLRQSDFASVDPAPPMPEDDEKQ). 3 HEAT-like PBS-type repeats span residues 189–219 (KRYR…LAKG), 227–253 (FRHE…ALSN), and 260–287 (VRHE…FLHD). Fe cation contacts are provided by His229, Glu230, His262, and Glu263.

The protein belongs to the deoxyhypusine hydroxylase family. Fe(2+) serves as cofactor.

It is found in the cytoplasm. The protein resides in the nucleus. The enzyme catalyses [eIF5A protein]-deoxyhypusine + AH2 + O2 = [eIF5A protein]-hypusine + A + H2O. It functions in the pathway protein modification; eIF5A hypusination. Its function is as follows. Catalyzes the hydroxylation of the N(6)-(4-aminobutyl)-L-lysine intermediate to form hypusine, an essential post-translational modification only found in mature eIF-5A factor. In Neurospora crassa (strain ATCC 24698 / 74-OR23-1A / CBS 708.71 / DSM 1257 / FGSC 987), this protein is Deoxyhypusine hydroxylase (lia1).